The primary structure comprises 252 residues: Protein A47 (252 aa).

It belongs to the orthopoxvirus A47 protein family.

The protein is Protein A47 of Vaccinia virus (strain Western Reserve) (VACV).